Reading from the N-terminus, the 460-residue chain is Ammonium transporter Rh type C (460 aa).

At 1–9 (MAWNTNLRW) the chain is on the cytoplasmic side. The helical transmembrane segment at 10-30 (RLPLTCLLLQVIMVILFGVFV) threads the bilayer. Residues 31–61 (RYDPDADAHWIDERLGRNISSDMDNEFYYRY) are Extracellular-facing. The N-linked (GlcNAc...) asparagine glycan is linked to Asn48. Residues 62 to 82 (PSFQDVHVMIFVGFGFLMTFL) form a helical membrane-spanning segment. Residues 83–86 (QRYG) lie on the Cytoplasmic side of the membrane. A helical membrane pass occupies residues 87–107 (FSSVGFNFLLAAFGIQWALLM). The Extracellular portion of the chain corresponds to 108 to 125 (QGWLHSFHSGYIVLGVEN). The helical transmembrane segment at 126-145 (LINADFCVGSVCVAFGAVLG) threads the bilayer. Residues 146–151 (KVSPVQ) are Cytoplasmic-facing. The helical transmembrane segment at 152 to 174 (LLIMTLFQVTLFSVNEFILLNLL) threads the bilayer. The Extracellular portion of the chain corresponds to 175 to 179 (EVKDA). Residues 180–200 (GGSMTIHTFGAYFGLTVTWIL) traverse the membrane as a helical segment. Topologically, residues 201–219 (YRPNLYQSKERQSSVYHSD) are cytoplasmic. A helical membrane pass occupies residues 220–240 (LFAMIGTLFLWMYWPSFNSAV). Residues 241–251 (SHHGDAQHRAA) lie on the Extracellular side of the membrane. Residues 252-272 (INTYCSLAACVLTSVALSSAL) form a helical membrane-spanning segment. At 273-285 (HKKGKLDMVHIQN) the chain is on the cytoplasmic side. The chain crosses the membrane as a helical span at residues 286-306 (ATLAGGVAVGTAAEMMLMPYG). Residue Ser307 is a topological domain, extracellular. A helical transmembrane segment spans residues 308 to 328 (LIVGFICGIISTLGFVYLTPF). Residues 329 to 340 (LESRLRIQDTCG) lie on the Cytoplasmic side of the membrane. The chain crosses the membrane as a helical span at residues 341–361 (IHNLHGMPGIIGGIVGAVTAA). The Extracellular portion of the chain corresponds to 362–396 (SANTQQYGQKGLAHAFDIDATKTTWTASMQGSFQA). A helical membrane pass occupies residues 397 to 417 (AGLFVSLAMALVGGLIVGVIL). Over 418–460 (KLPFWGQPADENCFEDAIYWEIPEDQKSLVSRSEDPTLRPTEP) the chain is Cytoplasmic.

The protein belongs to the ammonium transporter (TC 2.A.49) family. Rh subfamily. In terms of assembly, homotrimer. N-glycosylated.

It localises to the cell membrane. The protein resides in the apical cell membrane. The catalysed reaction is NH4(+)(in) = NH4(+)(out). The enzyme catalyses methylamine(out) = methylamine(in). It carries out the reaction CO2(out) = CO2(in). Its function is as follows. Ammonium transporter involved in the maintenance of acid-base homeostasis. Transports ammonium and its related derivative methylammonium across the plasma membrane of epithelial cells likely contributing to renal transepithelial ammonia transport and ammonia metabolism. Postulated to primarily mediate an electroneutral bidirectional transport of NH3 ammonia species according to a mechanism that implies interaction of an NH4(+) ion with acidic residues of the pore entry followed by dissociation of NH4(+) into NH3 and H(+). As a result NH3 transits through the central pore and is protonated on the extracellular side reforming NH4(+). May act as a CO2 channel providing for renal acid secretion. This Sus scrofa (Pig) protein is Ammonium transporter Rh type C (RHCG).